Consider the following 299-residue polypeptide: uncharacterized protein (299 aa).

The interval 1-20 is disordered; the sequence is MTTKHELVINTNEPSAPNAD. Residues 172–192 traverse the membrane as a helical segment; sequence SFFIPPMVVISTPICLGLTVF.

Belongs to the IIV-6 259R family.

It localises to the membrane. This is an uncharacterized protein from Acheta domesticus (House cricket).